A 637-amino-acid polypeptide reads, in one-letter code: Chaperone protein HtpG (637 aa).

An a; substrate-binding region spans residues 1 to 334; that stretch reads MQDVVNSEKL…SSDLPLNISR (334 aa). The interval 335–558 is b; sequence ETLQNNKVIE…DGSMDIRMER (224 aa). The c stretch occupies residues 559-637; it reads FLREQKQLNY…MNNVLVKVYQ (79 aa).

The protein belongs to the heat shock protein 90 family. Homodimer.

Its subcellular location is the cytoplasm. In terms of biological role, molecular chaperone. Has ATPase activity. The protein is Chaperone protein HtpG of Ehrlichia canis (strain Jake).